Reading from the N-terminus, the 318-residue chain is Acetyl-coenzyme A carboxylase carboxyl transferase subunit alpha (318 aa).

One can recognise a CoA carboxyltransferase C-terminal domain in the interval 39–293 (KLEKKVDKMR…HEALARHLKE (255 aa)).

This sequence belongs to the AccA family. Acetyl-CoA carboxylase is a heterohexamer composed of biotin carboxyl carrier protein (AccB), biotin carboxylase (AccC) and two subunits each of ACCase subunit alpha (AccA) and ACCase subunit beta (AccD).

The protein resides in the cytoplasm. It catalyses the reaction N(6)-carboxybiotinyl-L-lysyl-[protein] + acetyl-CoA = N(6)-biotinyl-L-lysyl-[protein] + malonyl-CoA. Its pathway is lipid metabolism; malonyl-CoA biosynthesis; malonyl-CoA from acetyl-CoA: step 1/1. In terms of biological role, component of the acetyl coenzyme A carboxylase (ACC) complex. First, biotin carboxylase catalyzes the carboxylation of biotin on its carrier protein (BCCP) and then the CO(2) group is transferred by the carboxyltransferase to acetyl-CoA to form malonyl-CoA. The sequence is that of Acetyl-coenzyme A carboxylase carboxyl transferase subunit alpha from Geobacter metallireducens (strain ATCC 53774 / DSM 7210 / GS-15).